Consider the following 427-residue polypeptide: MTNSLLNNGDMVQGVELPDADQQFWWDSLAPILSRMLQCSKYSVQSQANILSFFKDFIVPSYGPRPSIDGEFFWKSYVTYNHTPGQVSFNFHKNKCTVRLSNVPTAPLAGTASDPFNQKGVVQTIKHIQKALPGMDMTIFDYFSEAFLVADEDTVGLDARKPVPQYNQLVVASMLGYDFEPVPRVKVYFNPRWKALQMNIENHDLIWTAINNLGSPIKSYKRTLDLLQECGNPRQPGGWIFQPEFISFDMGENMSNTARLKLYGFTTKTCWSHIESIYTLDRRLDDAETQRGLAVLKRLWHLALSIPEDHDENQDLPPCPHLTAGVIYNYELRENSAKPEAKIYIPVRFYGSGDGKVIEGLVDFFKSEGWDELATSYQRDFVSVFSTPDGKMVGEHHDISFSYKNDHPYVTAYYRPELIRPMERHIV.

Residue 77 to 78 (YV) participates in L-tryptophan binding. The substrate site is built by R99, K186, Y188, R259, K261, Y263, Y344, Y409, and Y413.

This sequence belongs to the tryptophan dimethylallyltransferase family.

The protein operates within secondary metabolite biosynthesis. Its function is as follows. Indole diterpene prenyltransferase; part of the gene cluster that mediates the biosynthesis of the indole diterpenes penitrems. The geranylgeranyl diphosphate (GGPP) synthase penG catalyzes the first step in penitrem biosynthesis via conversion of farnesyl pyrophosphate and isopentyl pyrophosphate into geranylgeranyl pyrophosphate (GGPP). Condensation of indole-3-glycerol phosphate with GGPP by the prenyl transferase penC then forms 3-geranylgeranylindole (3-GGI). Epoxidation by the FAD-dependent monooxygenase penM leads to a epoxidized-GGI that is substrate of the terpene cyclase penB for cyclization to yield paspaline. Paspaline is subsequently converted to 13-desoxypaxilline by the cytochrome P450 monooxygenase penP, the latter being then converted to paxilline by the cytochrome P450 monooxygenase penQ. Paxilline is converted to beta-paxitriol via C-10 ketoreduction by the short-chain dehydrogenase PC-15 which can be monoprenylated at the C-20 by the indole diterpene prenyltransferase penD. A two-step elimination (acetylation and elimination) process performed by the O-acetyltransferase PC-16 and the P.simplicissimum ptmI-ortholog not yet identified in P.crustosum, leads to the production of the prenylated form of penijanthine. The FAD-linked oxidoreductase ptmO then converts the prenylated form of penijanthine into PC-M5 which is in turn transformed into PC-M4 by the aromatic dimethylallyltransferase PC-22. A series of oxidation steps involving 4 cytochrome P450 monooxygenases (PC-21, PC-05, PC-23, PC-20) and a FAD-dependent monooxygenase (PC-14) are required for the transformation of PC-M4 to penitrems A and E. Synthesis of these final products is proposed to proceed via penitrems D and C (PC-21, PC-05, PC-14) and penitrems B and F (PC-21, PC-05, PC-14, PC-23). This Penicillium crustosum (Blue mold fungus) protein is Indole diterpene prenyltransferase penD.